A 309-amino-acid chain; its full sequence is Dicarboxylate carrier UCP2 (309 aa).

Residues 1 to 16 are Mitochondrial intermembrane-facing; sequence MVGFKATDVPPTATVK. 3 Solcar repeats span residues 11–106, 114–203, and 212–297; these read PTAT…VKQF, ASIG…IKDA, and DDLP…LKRA. The interval 16-63 is important for interaction with long-chain fatty acids; it reads KFLGAGTAACIADLITFPLDTAKVRLQIQGESQGPVHATASAQYRGVM. The helical transmembrane segment at 17–40 threads the bilayer; it reads FLGAGTAACIADLITFPLDTAKVR. Over 41–77 the chain is Mitochondrial matrix; that stretch reads LQIQGESQGPVHATASAQYRGVMGTILTMVRTEGPRS. The chain crosses the membrane as a helical span at residues 78–103; the sequence is LYNGLVAGLQRQMSFASVRIGLYDSV. Over 104-119 the chain is Mitochondrial intermembrane; sequence KQFYTKGSEHASIGSR. Residues 120-145 form a helical membrane-spanning segment; sequence LLAGSTTGALAVAVAQPTDVVKVRFQ. Over 146–173 the chain is Mitochondrial matrix; the sequence is AQARAGGGRRYQSTVNAYKTIAREEGFR. The helical transmembrane segment at 174-199 threads the bilayer; the sequence is GLWKGTSPNVARNAIVNCAELVTYDL. Residues 200 to 217 are Mitochondrial intermembrane-facing; sequence IKDALLKANLMTDDLPCH. Residues 218–242 form a helical membrane-spanning segment; it reads FTSAFGAGFCTTVIASPVDVVKTRY. The Mitochondrial matrix portion of the chain corresponds to 243-268; that stretch reads MNSALGQYSSAGHCALTMLQKEGPRA. Residues 269-294 form a helical membrane-spanning segment; that stretch reads FYKGFMPSFLRLGSWNVVMFVTYEQL. The segment at 278–285 is important for interaction with long-chain fatty acids; the sequence is LRLGSWNV. The Mitochondrial intermembrane portion of the chain corresponds to 295 to 309; it reads KRALMAACTSREAPF.

This sequence belongs to the mitochondrial carrier (TC 2.A.29) family. Homotetramer. Adopts an asymmetrical dimer of dimers functional form. Interacts with MICU1 (when methylated); leading to decrease the calcium sensitivity of MICU1.

The protein localises to the mitochondrion inner membrane. The catalysed reaction is L-aspartate(out) + phosphate(in) + H(+)(in) = L-aspartate(in) + phosphate(out) + H(+)(out). It carries out the reaction oxaloacetate(out) + phosphate(in) + H(+)(in) = oxaloacetate(in) + phosphate(out) + H(+)(out). The enzyme catalyses (S)-malate(out) + phosphate(in) + H(+)(in) = (S)-malate(in) + phosphate(out) + H(+)(out). It catalyses the reaction malonate(out) + phosphate(in) + H(+)(in) = malonate(in) + phosphate(out) + H(+)(out). The catalysed reaction is sulfate(out) + phosphate(in) + H(+)(in) = sulfate(in) + phosphate(out) + H(+)(out). It carries out the reaction (S)-malate(out) = (S)-malate(in). The enzyme catalyses L-aspartate(out) = L-aspartate(in). It catalyses the reaction phosphate(in) = phosphate(out). The catalysed reaction is chloride(in) = chloride(out). It carries out the reaction H(+)(in) = H(+)(out). The enzyme catalyses a long-chain fatty acid(out) = a long-chain fatty acid(in). In terms of biological role, antiporter that exports dicarboxylate intermediates of the Krebs cycle in exchange for phosphate plus a proton across the inner membrane of mitochondria, a process driven by mitochondrial motive force with an overall impact on glycolysis, glutaminolysis and glutathione-dependent redox balance. Continuous export of oxaloacetate and related four-carbon dicarboxylates from mitochondrial matrix into the cytosol negatively regulates the oxidation of acetyl-CoA substrates via the Krebs cycle lowering the ATP/ADP ratio and reactive oxygen species (ROS) production. May mediate inducible proton entry into the mitochondrial matrix affecting ATP turnover as a protection mechanism against oxidative stress. The proton currents are most likely associated with fatty acid flipping across the inner membrane of mitochondria in a metabolic process regulated by free fatty acids and purine nucleotides. Regulates the use of glucose as a source of energy. Required for glucose-induced DRP1-dependent mitochondrial fission and neuron activation in the ventromedial nucleus of the hypothalamus (VMH). This mitochondrial adaptation mechanism modulates the VMH pool of glucose-excited neurons with an impact on systemic glucose homeostasis. Regulates ROS levels and metabolic reprogramming of macrophages during the resolution phase of inflammation. Attenuates ROS production in response to IL33 to preserve the integrity of the Krebs cycle required for persistent production of itaconate and subsequent GATA3-dependent differentiation of inflammation-resolving alternatively activated macrophages. Can unidirectionally transport anions including L-malate, L-aspartate, phosphate and chloride ions. Does not mediate adaptive thermogenesis. The sequence is that of Dicarboxylate carrier UCP2 (UCP2) from Pongo abelii (Sumatran orangutan).